The following is a 418-amino-acid chain: MLDINRIVQNPEELLSTLQKRGVVSSDIEAKIKSVSEKQRILKLEVEELRAERNRVSKEIGIQKSQGKDITEISNSMKGVGDRIKSIEEELTKEEESLHELNLGLPNLLDPSVPEGKSEEDNVLIRQWGEIPKLSFEAKTHFDIGEKLGIFDFERGVKLSGARFYTYRGLGAKLERSLMNLMLDTHTSENGYEEMWVPVLVNDESMTATGQLPKFAEDFYRLEKDGLNLIPTAEVPLTNYYRDEIIQEKELPISVCAHTSCFRREAGSYGRDTRGLVRVHQFQKVELVKFVEPEKSGEAHEKMLQDAESILQKLKLPYRVMLLCSKDMSSASSKTYDIEVWMPGLGRFMEISSVSNFKDYQARRGKIRYKSKEGKNLLVHTLNGSGLAIGRTLAAVIENYQSEDGTFQIPDVLKPYIR.

Residue 232-234 (TAE) participates in L-serine binding. ATP-binding positions include 263–265 (RRE) and Val279. L-serine is bound at residue Glu286. 350 to 353 (EISS) is an ATP binding site. Ser385 provides a ligand contact to L-serine.

The protein belongs to the class-II aminoacyl-tRNA synthetase family. Type-1 seryl-tRNA synthetase subfamily. Homodimer. The tRNA molecule binds across the dimer.

It is found in the cytoplasm. The enzyme catalyses tRNA(Ser) + L-serine + ATP = L-seryl-tRNA(Ser) + AMP + diphosphate + H(+). The catalysed reaction is tRNA(Sec) + L-serine + ATP = L-seryl-tRNA(Sec) + AMP + diphosphate + H(+). The protein operates within aminoacyl-tRNA biosynthesis; selenocysteinyl-tRNA(Sec) biosynthesis; L-seryl-tRNA(Sec) from L-serine and tRNA(Sec): step 1/1. Its function is as follows. Catalyzes the attachment of serine to tRNA(Ser). Is also able to aminoacylate tRNA(Sec) with serine, to form the misacylated tRNA L-seryl-tRNA(Sec), which will be further converted into selenocysteinyl-tRNA(Sec). The chain is Serine--tRNA ligase from Leptospira biflexa serovar Patoc (strain Patoc 1 / Ames).